The primary structure comprises 565 residues: Heme/hemopexin transporter protein HuxB (565 aa).

The signal sequence occupies residues 1 to 26 (MKMRPRYSVIASAVSLGFVLSKSVMA). The 78-residue stretch at 73–150 (FPLTQVQILD…GTVKILLLKG (78 aa)) folds into the POTRA domain.

Belongs to the TPS (TC 1.B.20) family.

The protein localises to the cell outer membrane. Functionally, likely functions in the release of soluble HxuA from the cell. Its function is as follows. Probable member of a two partner secretion pathway (TPS) in which it mediates the secretion of HuxA. This chain is Heme/hemopexin transporter protein HuxB (hxuB), found in Haemophilus influenzae.